The sequence spans 269 residues: Tryptophan synthase alpha chain (269 aa).

Residues Glu49 and Asp60 each act as proton acceptor in the active site.

It belongs to the TrpA family. As to quaternary structure, tetramer of two alpha and two beta chains.

The catalysed reaction is (1S,2R)-1-C-(indol-3-yl)glycerol 3-phosphate + L-serine = D-glyceraldehyde 3-phosphate + L-tryptophan + H2O. The protein operates within amino-acid biosynthesis; L-tryptophan biosynthesis; L-tryptophan from chorismate: step 5/5. Its function is as follows. The alpha subunit is responsible for the aldol cleavage of indoleglycerol phosphate to indole and glyceraldehyde 3-phosphate. The polypeptide is Tryptophan synthase alpha chain (Pseudomonas syringae pv. syringae).